Here is a 158-residue protein sequence, read N- to C-terminus: Rhombotin-2 (158 aa).

LIM zinc-binding domains are found at residues 30–89 (CGGC…RLFG) and 94–153 (CASC…EWTK).

In terms of assembly, interacts with BEX2 and KDM5A. Interacts via its LIM domains with ELF2 and LDB1. Also interacts with basic helix-loop-helix protein TAL1/SCL and can assemble in a complex with LMO2 and TAL1/SCL. In terms of tissue distribution, expressed in early mouse development in central nervous system, lung, kidney, liver and spleen but only very low levels occur in thymus.

The protein resides in the nucleus. Its function is as follows. Acts with TAL1/SCL to regulate red blood cell development. Also acts with LDB1 to maintain erythroid precursors in an immature state. This Mus musculus (Mouse) protein is Rhombotin-2 (Lmo2).